Consider the following 551-residue polypeptide: Transcription factor 7-like 1-B (551 aa).

A compositionally biased stretch (gly residues) spans Met-1–Glu-11. 3 disordered regions span residues Met-1 to Ser-76, Gln-298 to Ile-326, and Gly-392 to Pro-525. The span at Ile-19–Ser-32 shows a compositional bias: basic and acidic residues. Residues Ser-46–Ser-61 are compositionally biased toward low complexity. Basic and acidic residues predominate over residues Gln-63–Ser-76. Positions Ile-326–Ser-394 form a DNA-binding region, HMG box. Positions Ser-449 to Ser-468 are enriched in low complexity. Residues Glu-469–Thr-478 are compositionally biased toward polar residues. Residues Ser-493–Leu-505 show a composition bias toward low complexity.

Belongs to the TCF/LEF family. In terms of assembly, interacts with ctnnb1.

The protein localises to the nucleus. In terms of biological role, participates in the Wnt signaling pathway. Probably binds to DNA and acts as a repressor in the absence of ctnnb1, and possibly as an activator in its presence. Regulates anterior-posterior patterning in the neuroectoderm by repressing posterior neural fates. Also required for hindbrain morphogenesis. The protein is Transcription factor 7-like 1-B (tcf7l1b) of Danio rerio (Zebrafish).